We begin with the raw amino-acid sequence, 339 residues long: uncharacterized protein (339 aa).

The NADP(+) site is built by Ile54, Lys78, Asp101, Asn128, Tyr213, and Lys217. Tyr213 serves as the catalytic Proton donor. Residue Lys217 is the Lowers pKa of active site Tyr of the active site.

It belongs to the short-chain dehydrogenases/reductases (SDR) family.

This is an uncharacterized protein from Schizosaccharomyces pombe (strain 972 / ATCC 24843) (Fission yeast).